The following is a 58-amino-acid chain: MAEVRLGENESIDSAIRRFKKKIQKAGILSEVKRRERYEKPSLRRKRKAEAARKGGRY.

Positions 38–58 are disordered; that stretch reads YEKPSLRRKRKAEAARKGGRY. The segment covering 49–58 has biased composition (basic and acidic residues); it reads AEAARKGGRY.

It belongs to the bacterial ribosomal protein bS21 family.

The chain is Small ribosomal subunit protein bS21C (rpsU3) from Nostoc sp. (strain PCC 7120 / SAG 25.82 / UTEX 2576).